The sequence spans 365 residues: Putative carbonic anhydrase-like protein 1 (365 aa).

The N-terminal stretch at 1–25 (MRFECSHFPLFLIILTCHISPLKSS) is a signal peptide. Residues 28 to 356 (YQWSYDSDVF…TNNRLVRTNI (329 aa)) form the Alpha-carbonic anhydrase domain. The active site involves Tyr223. Substrate contacts are provided by residues Thr295 and 295-296 (TS).

It belongs to the alpha-carbonic anhydrase family.

The protein resides in the secreted. In Caenorhabditis elegans, this protein is Putative carbonic anhydrase-like protein 1 (cah-1).